Reading from the N-terminus, the 389-residue chain is MVTVEEVRKAQRAEGPATILAIGTATPPNYVDQSTYPDFYFRVTNSEHKKELKAKFQRMCDNSQIKKRYMHLTEEILKENPNICAYMAPSLDARQDMVVVEIPKLGKEAATRAIKEWGQPKSKITHLVFCTTSGVDMPGADYQLTKLLGLRPSVKRLMMYQQGCFAGGTVLRLAKDLAENNKGARVLVVCSEITAVTFRGPSDTHLDSLVGQALFGDGAAAVIIGSDPMPEVEKPLFEIVSAAQTILPDSDGAIDGHLREVGLTFHLLKDVPGLISKNIEKSLVEAFRPLDISDWNSIFWIAHPGGPAILDQVEKKLALKPEKLRATRNVLSDYGNMSSACVLFIMDEMRKNSAEEGLMTTGEGLEWGVLFGFGPGLTVETVVLHGVST.

The active site involves C164.

The protein belongs to the thiolase-like superfamily. Chalcone/stilbene synthases family.

The catalysed reaction is (E)-4-coumaroyl-CoA + 3 malonyl-CoA + 3 H(+) = 2',4,4',6'-tetrahydroxychalcone + 3 CO2 + 4 CoA. It participates in secondary metabolite biosynthesis; flavonoid biosynthesis. Its function is as follows. The primary product of this enzyme is 4,2',4',6'-tetrahydroxychalcone (also termed naringenin-chalcone or chalcone) which can under specific conditions spontaneously isomerize into naringenin. This Hydrangea macrophylla (Bigleaf hydrangea) protein is Chalcone synthase (CHS).